The sequence spans 221 residues: Protein GrpE (221 aa).

The interval 1–43 (MFTNPFGRKKDMSDDQKKNNQPDTEADNAENIKFAADDTELRA) is disordered. Basic and acidic residues predominate over residues 8 to 20 (RKKDMSDDQKKNN).

This sequence belongs to the GrpE family. In terms of assembly, homodimer.

The protein resides in the cytoplasm. Participates actively in the response to hyperosmotic and heat shock by preventing the aggregation of stress-denatured proteins, in association with DnaK and GrpE. It is the nucleotide exchange factor for DnaK and may function as a thermosensor. Unfolded proteins bind initially to DnaJ; upon interaction with the DnaJ-bound protein, DnaK hydrolyzes its bound ATP, resulting in the formation of a stable complex. GrpE releases ADP from DnaK; ATP binding to DnaK triggers the release of the substrate protein, thus completing the reaction cycle. Several rounds of ATP-dependent interactions between DnaJ, DnaK and GrpE are required for fully efficient folding. In Deinococcus radiodurans (strain ATCC 13939 / DSM 20539 / JCM 16871 / CCUG 27074 / LMG 4051 / NBRC 15346 / NCIMB 9279 / VKM B-1422 / R1), this protein is Protein GrpE.